Reading from the N-terminus, the 321-residue chain is Epiphycan (321 aa).

Residues 1–19 (MKALARLIVGLLILDAAVT) form the signal peptide. O-linked (GalNAc...) threonine glycosylation is present at threonine 60. Residue serine 64 is glycosylated (O-linked (Xyl...) (dermatan sulfate) serine). The interval 64–100 (SGNRELLTPPPQPEEAEEEEEEESTPRLIDGSSPQEP) is disordered. Over residues 77 to 86 (EEAEEEEEEE) the composition is skewed to acidic residues. O-linked (GalNAc...) serine glycosylation is present at serine 95. The LRRNT domain occupies 105 to 142 (VLGPQTNEDFPTCLLCTCISTTVYCDDHELDAIPPLPK). The cysteines at positions 117 and 129 are disulfide-linked. LRR repeat units lie at residues 143-164 (NTAYFYSRFNRIKKINKNDFAS), 167-188 (DLRRIDLTSNLISEIDEDAFRK), 191-212 (QLRELVLRDNKIRQLPELPTTL), 237-257 (DLHHLYLTDNNLDHIPLPLPE), and 258-279 (NLRALHLQNNNIMEMHEDTFCN). Cysteine 278 and cysteine 311 form a disulfide bridge. N-linked (GlcNAc...) asparagine glycosylation occurs at asparagine 282. Residues 289–309 (ALEDIRLDGNPINLSKTPQAY) form an LRR 6 repeat.

The protein belongs to the small leucine-rich proteoglycan (SLRP) family. SLRP class III subfamily. A long and a short form present in approximately equimolar amounts may arise by proteolysis or cleavage by exopeptidases. In terms of processing, the O-linked polysaccharides on Thr-60 and Ser-95 are probably the mucin type linked to GalNAc. There is one glycosaminoglycan chain, known to be dermatan sulfate, and it is probably the O-glycosylation at Ser-64. Preferentially expressed in the zone of flattened chondrocytes of the developing limb cartilage.

The protein resides in the secreted. It is found in the extracellular space. Its subcellular location is the extracellular matrix. Functionally, may have a role in bone formation and also in establishing the ordered structure of cartilage through matrix organization. The protein is Epiphycan (EPYC) of Bos taurus (Bovine).